We begin with the raw amino-acid sequence, 309 residues long: Oxygen-dependent coproporphyrinogen-III oxidase (309 aa).

A substrate-binding site is contributed by serine 94. Histidine 98 and histidine 108 together coordinate a divalent metal cation. Histidine 108 (proton donor) is an active-site residue. 110–112 (NVR) is a binding site for substrate. Residues histidine 147 and histidine 177 each contribute to the a divalent metal cation site. The segment at 242 to 277 (YVEFNLVWDRGTLFGLQTGGRTESILMSLPPLVRWE) is important for dimerization. 260–262 (GGR) contacts substrate.

It belongs to the aerobic coproporphyrinogen-III oxidase family. Homodimer. The cofactor is a divalent metal cation.

Its subcellular location is the cytoplasm. The enzyme catalyses coproporphyrinogen III + O2 + 2 H(+) = protoporphyrinogen IX + 2 CO2 + 2 H2O. The protein operates within porphyrin-containing compound metabolism; protoporphyrin-IX biosynthesis; protoporphyrinogen-IX from coproporphyrinogen-III (O2 route): step 1/1. In terms of biological role, involved in the heme biosynthesis. Catalyzes the aerobic oxidative decarboxylation of propionate groups of rings A and B of coproporphyrinogen-III to yield the vinyl groups in protoporphyrinogen-IX. This is Oxygen-dependent coproporphyrinogen-III oxidase from Yersinia pestis bv. Antiqua (strain Antiqua).